The following is a 257-amino-acid chain: Low affinity immunoglobulin gamma Fc region receptor III-A (257 aa).

An N-terminal signal peptide occupies residues 1 to 19 (MWQLLSPTALLLLVSVPGT). Residues 20–209 (HAEDPPKSVV…ILSFFLPWHQ (190 aa)) lie on the Extracellular side of the membrane. Ig-like C2-type domains follow at residues 25–104 (PKSV…LRLE) and 108–190 (GWLL…VKVT). Intrachain disulfides connect Cys-48–Cys-90 and Cys-129–Cys-173. N-linked (GlcNAc...) asparagine glycans are attached at residues Asn-64, Asn-134, and Asn-162. The N-linked (GlcNAc...) asparagine; in variant N-181 glycan is linked to Asp-181. Residues 210–230 (IIFCLVMGFLFAVDTGLYFSV) form a helical membrane-spanning segment. The Cytoplasmic segment spans residues 231–257 (RKVLRSSKEDWRNGKVTWSRDPADKGG).

Forms a heterooligomeric complex with ITAM-containing signaling subunits FCER1G. Interacts (via transmembrane domain) with signaling subunits; this interaction is a prerequisite for receptor complex expression on the cell surface and intracellular signal transduction. Binds the Fc region of antigen-complexed IgG. Expressed in polymorphonuclear leukocytes, pulmonary alveolar macrophages and peripheral blood mononuclear cells (at protein level). Found in spleen, and at very low levels in lymph nodes but not in thymus or liver.

The protein resides in the cell membrane. In terms of biological role, receptor for the invariable Fc fragment of immunoglobulin gamma (IgG). Optimally activated upon binding of clustered antigen-IgG complexes displayed on cell surfaces, triggers lysis of antibody-coated cells, a process known as antibody-dependent cellular cytotoxicity (ADCC). Does not bind free monomeric IgG, thus avoiding inappropriate effector cell activation in the absence of antigenic trigger. Mediates IgG effector functions on natural killer (NK) cells. Binds antigen-IgG complexes generated upon infection and triggers NK cell-dependent cytokine production and degranulation to limit viral load and propagation. Fc-binding subunit that associates with FCER1G adapter to form functional signaling complexes. Following the engagement of antigen-IgG complexes, triggers phosphorylation of immunoreceptor tyrosine-based activation motif (ITAM)-containing adapter with subsequent activation of phosphatidylinositol 3-kinase signaling and sustained elevation of intracellular calcium that ultimately drive NK cell activation. Mediates enhanced ADCC in response to afucosylated IgGs. This chain is Low affinity immunoglobulin gamma Fc region receptor III-A, found in Sus scrofa (Pig).